A 407-amino-acid chain; its full sequence is L-amino-acid oxidase (407 aa).

Cys10 and Cys94 are disulfide-bonded. An N-linked (GlcNAc...) asparagine glycan is attached at Asn93. Substrate is bound at residue His144. Val182 is a binding site for FAD. A disulfide bond links Cys252 and Cys333. N-linked (GlcNAc...) asparagine glycosylation is present at Asn282. Residue Tyr293 participates in substrate binding. Residues Glu378 and 385–390 (GWIDST) contribute to the FAD site. 385–386 (GW) serves as a coordination point for substrate.

It belongs to the flavin monoamine oxidase family. FIG1 subfamily. Homodimer; non-covalently linked. FAD serves as cofactor. As to expression, expressed by the venom gland.

The protein resides in the secreted. It carries out the reaction an L-alpha-amino acid + O2 + H2O = a 2-oxocarboxylate + H2O2 + NH4(+). The catalysed reaction is L-leucine + O2 + H2O = 4-methyl-2-oxopentanoate + H2O2 + NH4(+). The enzyme catalyses L-phenylalanine + O2 + H2O = 3-phenylpyruvate + H2O2 + NH4(+). It catalyses the reaction L-isoleucine + O2 + H2O = (S)-3-methyl-2-oxopentanoate + H2O2 + NH4(+). It carries out the reaction L-aspartate + O2 + H2O = oxaloacetate + H2O2 + NH4(+). The catalysed reaction is L-lysine + O2 + H2O = 6-amino-2-oxohexanoate + H2O2 + NH4(+). The enzyme catalyses L-glutamate + O2 + H2O = H2O2 + 2-oxoglutarate + NH4(+). Functionally, catalyzes an oxidative deamination of predominantly hydrophobic and aromatic L-amino acids, thus producing hydrogen peroxide that may contribute to the diverse toxic effects of this enzyme. Is highly active on L-Leu followed by L-Phe and L-Ile, moderately active on L-Asp, L-Glu, and L-Lys, and not active on L-Pro, L-Asn, L-Gly, L-Ser and L-Cys. Exhibits diverse biological activities such as antibacterial activity (Minimal inhibitory concentrations (MIC) are 9.0 ug/ml against S.aureus, 144.0 ug/ml against P.aeruginosa and 288.0 ug/ml against E.coli) and inhibition of ADP- and TMVA-induced platelet aggregation. Effects of snake L-amino oxidases on platelets are controversial, since they either induce aggregation or inhibit agonist-induced aggregation. These different effects are probably due to different experimental conditions. Unlike other snake venom L-amino acid oxidases, does not induce hemorrhage. This protein may also induce hemolysis, edema, apoptosis and have antiparasitic activities. The chain is L-amino-acid oxidase from Daboia siamensis (Eastern Russel's viper).